A 279-amino-acid chain; its full sequence is Ribosomal RNA small subunit methyltransferase J (279 aa).

Residues 138–139 and aspartate 194 each bind S-adenosyl-L-methionine; that span reads ER.

The protein belongs to the methyltransferase superfamily. RsmJ family.

The protein resides in the cytoplasm. The catalysed reaction is guanosine(1516) in 16S rRNA + S-adenosyl-L-methionine = N(2)-methylguanosine(1516) in 16S rRNA + S-adenosyl-L-homocysteine + H(+). In terms of biological role, specifically methylates the guanosine in position 1516 of 16S rRNA. In Acinetobacter baumannii (strain SDF), this protein is Ribosomal RNA small subunit methyltransferase J.